The following is a 345-amino-acid chain: Hydroxymethylglutaryl-CoA synthase (345 aa).

Position 28 (D28) interacts with (3S)-3-hydroxy-3-methylglutaryl-CoA. E80 serves as the catalytic Proton donor/acceptor. C112 and T153 together coordinate (3S)-3-hydroxy-3-methylglutaryl-CoA. C112 acts as the Acyl-thioester intermediate in catalysis. R199 provides a ligand contact to CoA. The (3S)-3-hydroxy-3-methylglutaryl-CoA site is built by T201 and H234. H234 (proton donor/acceptor) is an active-site residue. K239 provides a ligand contact to CoA. Residues R243, N266, and S296 each contribute to the (3S)-3-hydroxy-3-methylglutaryl-CoA site.

Belongs to the thiolase-like superfamily. Archaeal HMG-CoA synthase family. In terms of assembly, interacts with acetoacetyl-CoA thiolase that catalyzes the precedent step in the pathway and with a DUF35 protein. The acetoacetyl-CoA thiolase/HMG-CoA synthase complex channels the intermediate via a fused CoA-binding site, which allows for efficient coupling of the endergonic thiolase reaction with the exergonic HMGCS reaction.

The catalysed reaction is acetoacetyl-CoA + acetyl-CoA + H2O = (3S)-3-hydroxy-3-methylglutaryl-CoA + CoA + H(+). It functions in the pathway metabolic intermediate biosynthesis; (R)-mevalonate biosynthesis; (R)-mevalonate from acetyl-CoA: step 2/3. Catalyzes the condensation of acetyl-CoA with acetoacetyl-CoA to form 3-hydroxy-3-methylglutaryl-CoA (HMG-CoA). Functions in the mevalonate (MVA) pathway leading to isopentenyl diphosphate (IPP), a key precursor for the biosynthesis of isoprenoid compounds that are building blocks of archaeal membrane lipids. The protein is Hydroxymethylglutaryl-CoA synthase of Methanocaldococcus jannaschii (strain ATCC 43067 / DSM 2661 / JAL-1 / JCM 10045 / NBRC 100440) (Methanococcus jannaschii).